The sequence spans 470 residues: uncharacterized protein (470 aa).

Residues 1–69 (MTRYQHLATL…PRSGYFVAQR (69 aa)) form the HTH gntR-type domain. Residue lysine 313 is modified to N6-(pyridoxal phosphate)lysine.

In the C-terminal section; belongs to the class-I pyridoxal-phosphate-dependent aminotransferase family.

This is an uncharacterized protein from Escherichia coli (strain K12).